A 591-amino-acid polypeptide reads, in one-letter code: Metastasis-associated protein MTA3 (591 aa).

Residues 1 to 147 form the BAH domain; the sequence is MAANMYRVGD…PSVKTLLADK (147 aa). Residues 148–258 form the ELM2 domain; that stretch reads GEIRVGPKYQ…SAISVLVPLG (111 aa). In terms of domain architecture, SANT spans 265 to 317; the sequence is DEMEEWSASEACLFEEALEKYGKDFNDIRQDFLPWKSLTSIIEYYYMWKTTDR. A GATA-type; atypical zinc finger spans residues 377–404; the sequence is CESCYATQSHQWYSWGPPNMQCRLCATC. The disordered stretch occupies residues 417–456; it reads PTQSDEEKSPSPTAEDPRARSHMSRQALQGMPVRNTGSPK. The segment covering 421 to 435 has biased composition (basic and acidic residues); it reads DEEKSPSPTAEDPRA. Phosphoserine occurs at positions 425 and 427. Threonine 452 is modified (phosphothreonine). Phosphoserine is present on serine 516.

It belongs to the metastasis-associated protein family. Component of the nucleosome remodeling and deacetylase (NuRD) repressor complex, composed of core proteins MTA1, MTA2, MTA3, RBBP4, RBBP7, HDAC1, HDAC2, MBD2, MBD3, and peripherally associated proteins CDK2AP1, CDK2AP2, GATAD2A, GATAD2B, CHD3, CHD4 and CHD5. The exact stoichiometry of the NuRD complex is unknown, and some subunits such as MBD2 and MBD3, GATAD2A and GATAD2B, and CHD3, CHD4 and CHD5 define mutually exclusive NuRD complexes. Interacts with BCL6. Interacts with NACC2. Interacts with PWWP2B. In terms of tissue distribution, expressed in heart, brain, spleen, lung, liver and kidney.

The protein resides in the nucleus. It localises to the cytoplasm. In terms of biological role, acts as a component of the histone deacetylase NuRD complex which participates in the remodeling of chromatin. Plays a role in maintenance of the normal epithelial architecture through the repression of SNAI1 transcription in a histone deacetylase-dependent manner, and thus the regulation of E-cadherin levels. Contributes to transcriptional repression by BCL6. The sequence is that of Metastasis-associated protein MTA3 (Mta3) from Mus musculus (Mouse).